The chain runs to 403 residues: uncharacterized protein (403 aa).

12 consecutive transmembrane segments (helical) span residues 25 to 47 (IAFFLAGFSTFSTLYCVQPILFL), 62 to 81 (SLSASTAMMAFGMLFTGPLS), 88 to 110 (VVMSSSLFLASFCTFCCSNMNSW), 114 to 136 (IFMRALTGLALSGVAAVAMTYLS), 143 to 165 (VLSFSIGLYISGNTIGGFLGRFL), 175 to 197 (WNIALEFISFLAFTSAVLFVYLL), 229 to 251 (LFFMGCILMGSFITLFNYVGYRL), 256 to 278 (FFLGQTTIGLLSIIYLIGVYSSP), 290 to 307 (GVILTLALTMMIFGVLIT), 311 to 330 (IVLLIIVGLTLFAAGFFAAH), 350 to 372 (SIYLFSYYLGSSIFGTFSGIFWI), and 376 to 398 (WLGISIFIITFLCIGILLSIRLL).

It belongs to the major facilitator superfamily.

It is found in the cell membrane. This is an uncharacterized protein from Buchnera aphidicola subsp. Baizongia pistaciae (strain Bp).